The chain runs to 205 residues: Holliday junction branch migration complex subunit RuvA (205 aa).

Residues Met1–Ala64 are domain I. The segment at Glu65 to Leu143 is domain II. The interval Ala144–Ser153 is flexible linker. Residues Ser153–Val205 form a domain III region.

This sequence belongs to the RuvA family. In terms of assembly, homotetramer. Forms an RuvA(8)-RuvB(12)-Holliday junction (HJ) complex. HJ DNA is sandwiched between 2 RuvA tetramers; dsDNA enters through RuvA and exits via RuvB. An RuvB hexamer assembles on each DNA strand where it exits the tetramer. Each RuvB hexamer is contacted by two RuvA subunits (via domain III) on 2 adjacent RuvB subunits; this complex drives branch migration. In the full resolvosome a probable DNA-RuvA(4)-RuvB(12)-RuvC(2) complex forms which resolves the HJ.

It is found in the cytoplasm. Its function is as follows. The RuvA-RuvB-RuvC complex processes Holliday junction (HJ) DNA during genetic recombination and DNA repair, while the RuvA-RuvB complex plays an important role in the rescue of blocked DNA replication forks via replication fork reversal (RFR). RuvA specifically binds to HJ cruciform DNA, conferring on it an open structure. The RuvB hexamer acts as an ATP-dependent pump, pulling dsDNA into and through the RuvAB complex. HJ branch migration allows RuvC to scan DNA until it finds its consensus sequence, where it cleaves and resolves the cruciform DNA. This Cellvibrio japonicus (strain Ueda107) (Pseudomonas fluorescens subsp. cellulosa) protein is Holliday junction branch migration complex subunit RuvA.